A 597-amino-acid chain; its full sequence is Proline--tRNA ligase (597 aa).

The protein belongs to the class-II aminoacyl-tRNA synthetase family. ProS type 1 subfamily. In terms of assembly, homodimer.

The protein resides in the cytoplasm. The catalysed reaction is tRNA(Pro) + L-proline + ATP = L-prolyl-tRNA(Pro) + AMP + diphosphate. Functionally, catalyzes the attachment of proline to tRNA(Pro) in a two-step reaction: proline is first activated by ATP to form Pro-AMP and then transferred to the acceptor end of tRNA(Pro). As ProRS can inadvertently accommodate and process non-cognate amino acids such as alanine and cysteine, to avoid such errors it has two additional distinct editing activities against alanine. One activity is designated as 'pretransfer' editing and involves the tRNA(Pro)-independent hydrolysis of activated Ala-AMP. The other activity is designated 'posttransfer' editing and involves deacylation of mischarged Ala-tRNA(Pro). The misacylated Cys-tRNA(Pro) is not edited by ProRS. In Bifidobacterium longum (strain NCC 2705), this protein is Proline--tRNA ligase.